A 249-amino-acid chain; its full sequence is Uridylate kinase (249 aa).

ATP is bound at residue 22-25 (KISG). The involved in allosteric activation by GTP stretch occupies residues 30–35 (GTQGFG). G64 is a binding site for UMP. G65 and R69 together coordinate ATP. UMP is bound by residues D84 and 145–152 (TGNPYFTT). ATP contacts are provided by N173, Y179, and D182.

It belongs to the UMP kinase family. Homohexamer.

The protein localises to the cytoplasm. The enzyme catalyses UMP + ATP = UDP + ADP. It functions in the pathway pyrimidine metabolism; CTP biosynthesis via de novo pathway; UDP from UMP (UMPK route): step 1/1. Its activity is regulated as follows. Allosterically activated by GTP. Inhibited by UTP. In terms of biological role, catalyzes the reversible phosphorylation of UMP to UDP. This is Uridylate kinase from Ruegeria sp. (strain TM1040) (Silicibacter sp.).